The primary structure comprises 568 residues: MVSGTDTTEVGATTKAPPSEGTEGILDDHSSNSQPQAEKPAKTHYPLSFWLAFLGLCCTGLVSALDGSIVATALPSIIESLDGGDDYPLYGQLADLWGRRYVMIGATIIFILGSGLCGGSSSMNMLIWSRAVQGIGAGGINMLIDMIICDLVPMRERGNFIGLLFLFVSLGATIGPFVGGILTDRASWRWLWLLILLQIFYINLPFGGVALLLLILFLHVKWKNDLSTMERLRRVDVIGNSILIGATFAILYALTYGGTRYTWSDPHIAAPLTIGLVGLVAAFFWEMSPWCKYPVMPPLHFQNRTSAAAFFISFMCMLLAFWINFFYPVYFQAVLIASPTRAGVYTLPRAIAFPLFAAVGGAIVSKTGRYRTVHLVSTGIMPLVMGLSSILDQGSSKAEWVIWQLLFGVSGGMMISTTLQAVQAALPESEVATSVGTWSFVRSLGTIWGLSIPAAIFNNRFDQLSTQFDPSIRALFTRGQAYEHGTAKFIQSFDPETRQIVIQAYIEALKRVWQIGIVFGGVTFLSVFFEKEIHLRTELKTDFGLDEKKKGEVAKEENDVENNGTTVQ.

A compositionally biased stretch (polar residues) spans 1 to 11 (MVSGTDTTEVG). The tract at residues 1-39 (MVSGTDTTEVGATTKAPPSEGTEGILDDHSSNSQPQAEK) is disordered. The next 7 helical transmembrane spans lie at 45-65 (YPLSFWLAFLGLCCTGLVSAL), 101-121 (YVMIGATIIFILGSGLCGGSS), 134-154 (GIGAGGINMLIDMIICDLVPM), 161-181 (IGLLFLFVSLGATIGPFVGGI), 199-219 (IFYINLPFGGVALLLLILFLH), 237-257 (VIGNSILIGATFAILYALTYG), and 268-288 (IAAPLTIGLVGLVAAFFWEMS). N-linked (GlcNAc...) asparagine glycosylation is present at Asn303. The next 6 membrane-spanning stretches (helical) occupy residues 307 to 327 (AAAFFISFMCMLLAFWINFFY), 344 to 364 (VYTLPRAIAFPLFAAVGGAIV), 372 to 392 (TVHLVSTGIMPLVMGLSSILD), 399 to 419 (EWVIWQLLFGVSGGMMISTTL), 437 to 457 (TWSFVRSLGTIWGLSIPAAIF), and 515 to 535 (IGIVFGGVTFLSVFFEKEIHL). A glycan (N-linked (GlcNAc...) asparagine) is linked at Asn563.

The protein belongs to the major facilitator superfamily.

It localises to the cell membrane. MFS-type efflux transporter; part of the gene cluster that mediates the biosynthesis of thethe mycotoxins phomacins, leucine-derived cytochalasans with potent actin polymerization-inhibitory activities and monocot-specific antigerminative activities. PhmH might be involved in the excretion of phomacins. The polypeptide is MFS-type efflux transporter phmH (Phaeosphaeria nodorum (strain SN15 / ATCC MYA-4574 / FGSC 10173) (Glume blotch fungus)).